Consider the following 332-residue polypeptide: MHSPKSFLLLAVVFVALRVTAAPLWNAKNPEQLQYIAARCMEEWSPKAKDPKAALKNWMEWKLQPSNEEATQCYTKCMLENIGYYEPGEKRLKGVRVMQQWETFNRYQSADRNKVHDLTDTFDFIKPLKSSSCSDVFNAYKDVHAKHLETIKAILFCDGKSAEKYYKDKGKNVKQKGESIFVHCEEIHYPVGSPQRNELCKVRKYELGTGKPFENLMECIFKGVRYFNDKNELNIDEIARDFTQVGKKPDAVKAAMENCKSKTKETDPGKKAVEYYKCLLADSKVKKDFMEAFDYREIRSKDYYAQITGKLKPYSASDVRKEVNDIDSNKCV.

The signal sequence occupies residues 1 to 21 (MHSPKSFLLLAVVFVALRVTA). 2 disulfide bridges follow: cysteine 40–cysteine 77 and cysteine 73–cysteine 133. Tryptophan 61 is a leukotriene E4 binding site. Leukotriene E4 is bound at residue lysine 176. 3 cysteine pairs are disulfide-bonded: cysteine 184/cysteine 219, cysteine 200/cysteine 331, and cysteine 259/cysteine 278. Noradrenaline is bound by residues glutamate 185 and arginine 203. Aspartate 294 and glutamate 297 together coordinate noradrenaline.

Belongs to the PBP/GOBP family. As to expression, female mosquito salivary gland (at protein level).

Its subcellular location is the secreted. Its function is as follows. Modulates blood feeding of female mosquitoes on vertebrate species by binding and sequestering different mediators involved in the host response, such as biogenic amines and eicosanoids. Binds dopamine, serotonin, histamine, tryptamine, adrenaline, noradrenaline, leukotriene B4, leukotriene C4, leukotriene D4, leukotriene E4 and U-46619, a stable analog of thromboxane A2. Inhibits platelet aggregation induced by serotonin and low doses of thromboxane A2 analog U-46619 but not by high doses of U-46619, collagen or ADP. Prevents leukocyte recruitment. This Aedes albopictus (Asian tiger mosquito) protein is Long form salivary protein D7L1.